The chain runs to 223 residues: Deoxyribose-phosphate aldolase (223 aa).

Aspartate 91 serves as the catalytic Proton donor/acceptor. Lysine 154 serves as the catalytic Schiff-base intermediate with acetaldehyde. Lysine 183 functions as the Proton donor/acceptor in the catalytic mechanism.

This sequence belongs to the DeoC/FbaB aldolase family. DeoC type 1 subfamily.

It localises to the cytoplasm. The enzyme catalyses 2-deoxy-D-ribose 5-phosphate = D-glyceraldehyde 3-phosphate + acetaldehyde. It participates in carbohydrate degradation; 2-deoxy-D-ribose 1-phosphate degradation; D-glyceraldehyde 3-phosphate and acetaldehyde from 2-deoxy-alpha-D-ribose 1-phosphate: step 2/2. Catalyzes a reversible aldol reaction between acetaldehyde and D-glyceraldehyde 3-phosphate to generate 2-deoxy-D-ribose 5-phosphate. The protein is Deoxyribose-phosphate aldolase of Lysinibacillus sphaericus (strain C3-41).